A 118-amino-acid polypeptide reads, in one-letter code: Na(+)/H(+) antiporter subunit G1 (118 aa).

3 helical membrane-spanning segments follow: residues 9 to 29 (LAVI…IGII), 47 to 67 (LGAI…DGYI), and 69 to 89 (MQLI…SHLI).

Belongs to the CPA3 antiporters (TC 2.A.63) subunit G family. As to quaternary structure, may form a heterooligomeric complex that consists of seven subunits: mnhA1, mnhB1, mnhC1, mnhD1, mnhE1, mnhF1 and mnhG1.

The protein resides in the cell membrane. Mnh complex is a Na(+)/H(+) antiporter involved in Na(+) excretion. The chain is Na(+)/H(+) antiporter subunit G1 (mnhG1) from Staphylococcus haemolyticus (strain JCSC1435).